Consider the following 439-residue polypeptide: ATP-dependent protease ATPase subunit HslU (439 aa).

Residues Ile-17, 59 to 64 (GVGKTE), Asp-251, Glu-317, and Arg-389 each bind ATP.

This sequence belongs to the ClpX chaperone family. HslU subfamily. A double ring-shaped homohexamer of HslV is capped on each side by a ring-shaped HslU homohexamer. The assembly of the HslU/HslV complex is dependent on binding of ATP.

It is found in the cytoplasm. In terms of biological role, ATPase subunit of a proteasome-like degradation complex; this subunit has chaperone activity. The binding of ATP and its subsequent hydrolysis by HslU are essential for unfolding of protein substrates subsequently hydrolyzed by HslV. HslU recognizes the N-terminal part of its protein substrates and unfolds these before they are guided to HslV for hydrolysis. In Campylobacter jejuni subsp. jejuni serotype O:6 (strain 81116 / NCTC 11828), this protein is ATP-dependent protease ATPase subunit HslU.